The sequence spans 370 residues: Aminomethyltransferase (370 aa).

It belongs to the GcvT family. The glycine cleavage system is composed of four proteins: P, T, L and H.

It carries out the reaction N(6)-[(R)-S(8)-aminomethyldihydrolipoyl]-L-lysyl-[protein] + (6S)-5,6,7,8-tetrahydrofolate = N(6)-[(R)-dihydrolipoyl]-L-lysyl-[protein] + (6R)-5,10-methylene-5,6,7,8-tetrahydrofolate + NH4(+). Functionally, the glycine cleavage system catalyzes the degradation of glycine. In Stenotrophomonas maltophilia (strain R551-3), this protein is Aminomethyltransferase.